Here is a 258-residue protein sequence, read N- to C-terminus: (7aS)-7a-methyl-1,5-dioxo-2,3,5,6,7,7a-hexahydro-1H-indene-carboxyl-CoA hydrolase (258 aa).

It belongs to the enoyl-CoA hydratase/isomerase family.

The catalysed reaction is (7aS)-7a-methyl-1,5-dioxo-2,3,5,6,7,7a-hexahydro-1H-indene-carboxyl-CoA + H2O = (3E)-2-(2-carboxylatoethyl)-3-methyl-6-oxocyclohex-1-ene-1-carboxyl-CoA + H(+). Its pathway is steroid metabolism; cholesterol degradation. Its function is as follows. Involved in the final steps of cholesterol and steroid degradation. Catalyzes the hydrolytic ring D opening of (7aS)-7a-methyl-1,5-dioxo-2,3,5,6,7,7a-hexahydro-1H-indene-carboxyl-CoA (HIEC-CoA) to (3E)-2-(2-carboxylatoethyl)-3-methyl-6-oxocyclohex-1-ene-1-carboxyl-CoA (COCHEA-CoA). This chain is (7aS)-7a-methyl-1,5-dioxo-2,3,5,6,7,7a-hexahydro-1H-indene-carboxyl-CoA hydrolase, found in Rhodococcus jostii (strain RHA1).